A 1885-amino-acid polypeptide reads, in one-letter code: MATRGNVPAHMQASLPALPAHLQSDTHITAHLASRFHVSLPTARLSSQGLICLNTFTSSTRGPNGDKEGSAMGEPEDLARRAWARLGNRAEDQAFGFFGESGSGKTTVRSHLLSSFLSFSSTPLSSKLSLAAFVFDTLTTTKTTTTQTASKAGLFYELQYDASSNNPTLIGGKLLDHRFERSRISHVPTGERSFHVLYYLLAGTSAAEKSHLGLDGHVNITTAGTGLSRSASVSHKRWRYLGHPTQMKVGINDAEGFQHFKNALRKLEFPRTEIAEICQVLAAILHIGQLEFGTGQATLTAAEESGGYSHEGGETVTVVKNRDTLAIVAAFLGLGVQDLEESLRYKTRTIHRERVTVMLDTKGARENADELATTLYSLLVTYIIESINQRVCAAEDSVANTISIVDFPGFADHSSTGSVLDQLLNNAANESLYNTCLHSIFEKTAEMLESEEVSVPATSYFDNSDAVRGLLKHGNGLLAILDDQTRRGRTDVQFLESLRKRFENKNKAITVGSATSTMPGSNFATTNLAASFTVRHYAGEVDYPVHSLVEENGDVVSGDLMNMIKATKSDFVANLFGQEALNTVSHPAEKTAIVQAQVSSKPLRMPSVSRKKHDQLRRMASRRADRSPAPQEEEPLPGTEEAKVRRTKPTATGLTQGAAAQFLSALDNITKSLTAPNVNNYFVFCLKPNDRRIANQFDSKCVRQQVQMFGIAEISQRLRTADFTIFLPFGEFLGLTNADGGVVGSDREKAQLVLDSKHWPPNEARIGNTGVFLSERCWASIALTGSQAAAYFGGDIGSPSRPDTPGHNPFSDSKARLVGSADGTPGSFYGDEAKGGGYFGSRELDAKSDAGASAFHSGDMFRNLETKEELAEKGNKKKVEEVDVVPVSSSRKRWLAIVYFLTWYLPDFAIKWIGGMKRKDVRTAWREKFAINLLIWLSCGLVVFFIIVFPELICPKQNVYSAAELSAHDGKGKHSAYVAIRGQVFDLGAFMPNHYPKIIPQSSLKKYAGVDATGLFPVQVSALCQGKDGRVDPTVQLDYTATNISGTAAVISSTDANRKYHDFRYFTNDSRPDWFYEQMIMLKANYRKGSIGYTPQYVKTLAKKSKSIAILNDRVYDFTTYNEGGRSVRAPPGEEVPSGVDTDFMDSLVVDLFTQRAGHDVTKYWNALPLDPGLRSRMQLCLDNLFFVGVTDTRNSPRCLFARYILLAVSILLCSVIGFKFFAALQFGGKNVPENLDKFVICQVPAYTEDEDSLRRAIDSAARMRYDDKRKLLIVVCDGMIIGQGNDRPTPRIVLDILGVSETVDPEPLSFESLGEGMKQHNMGKVYSGLYEVQGHIVPFMVVVKVGKPSEVSRPGNRGKRDSQMVIMRFLHRVHYNLPMSPLELEMHHQIRNIIGVNPTFYEFMLQIDADTVVAPDSATRMVSAFLRDTRLIGVCGETSLSNAKSSFITMMQVYEYYISHNLTKAFESLFGSVTCVPGCFTMYRIRAAETGKPLFVSKEIIQDYSEIRVDTLHMKNLLHLGEDRYLTTLLLKYHSKYKTKYIFHAHAWTIAPDSWKVFMSQRRRWINSTVHNLIELIPLQQLCGFCCFSMRFVVFLDLLSTVVAPVTVAYIAYLIVLLATESDVVPLTAFILLGAIYGLQAIIFILRRKWEMIGWMIVYILAMPVFSLGLPLYAFWHMDDFSWGNTRLVRGEHGKQILLSDEGKFGPDSIPKKKWEEYQAELWDAQTQRDDARSELSGYSYGTKSYLPTGSVYGGGYNDTQHLMMAPSRSASQLDMHPTPMYGGGGGHNQSRMSLAPSEMLGSQSNLMMPSGRSVADMEMSDLTGLPTDDMLLNEIRDILRTADLMTVTKKGIKQELERRFNVNLDMKRAYIGSATEAILSGQL.

A Myosin motor domain is found at 1–789 (MATRGNVPAH…SIALTGSQAA (789 aa)). Residue 99 to 106 (GESGSGKT) participates in ATP binding. 2 N-linked (GlcNAc...) asparagine glycosylation sites follow: Asn-219 and Asn-429. The disordered stretch occupies residues 601–649 (KPLRMPSVSRKKHDQLRRMASRRADRSPAPQEEEPLPGTEEAKVRRTKP). The span at 609–621 (SRKKHDQLRRMAS) shows a compositional bias: basic residues. The actin-binding stretch occupies residues 666 to 690 (LDNITKSLTAPNVNNYFVFCLKPND). N-linked (GlcNAc...) asparagine glycosylation is present at Asn-668. The disordered stretch occupies residues 794–817 (GDIGSPSRPDTPGHNPFSDSKARL). 2 helical membrane-spanning segments follow: residues 894–914 (WLAIVYFLTWYLPDFAIKWIG) and 929–949 (FAINLLIWLSCGLVVFFIIVF). Residues 957–1016 (QNVYSAAELSAHDGKGKHSAYVAIRGQVFDLGAFMPNHYPKIIPQSSLKKYAGVDATGLF) form the Cytochrome b5 heme-binding domain. 2 N-linked (GlcNAc...) asparagine glycosylation sites follow: Asn-1043 and Asn-1068. A helical transmembrane segment spans residues 1205-1225 (ILLAVSILLCSVIGFKFFAAL). 2 N-linked (GlcNAc...) asparagine glycosylation sites follow: Asn-1462 and Asn-1568. 3 consecutive transmembrane segments (helical) span residues 1599 to 1619 (LLSTVVAPVTVAYIAYLIVLL), 1626 to 1646 (VPLTAFILLGAIYGLQAIIFI), and 1653 to 1673 (MIGWMIVYILAMPVFSLGLPL). N-linked (GlcNAc...) asparagine glycans are attached at residues Asn-1759 and Asn-1790. In terms of domain architecture, DEK-C spans 1827–1882 (LPTDDMLLNEIRDILRTADLMTVTKKGIKQELERRFNVNLDMKRAYIGSATEAILS).

In the N-terminal section; belongs to the TRAFAC class myosin-kinesin ATPase superfamily. Myosin family. It in the C-terminal section; belongs to the chitin synthase family. Class V subfamily. Maximal activity requires trypsin activation, suggesting a zymogenic nature.

It localises to the cell membrane. The protein resides in the membrane. It carries out the reaction [(1-&gt;4)-N-acetyl-beta-D-glucosaminyl](n) + UDP-N-acetyl-alpha-D-glucosamine = [(1-&gt;4)-N-acetyl-beta-D-glucosaminyl](n+1) + UDP + H(+). Functionally, polymerizes chitin, a structural polymer of the cell wall and septum, by transferring the sugar moiety of UDP-GlcNAc to the non-reducing end of the growing chitin polymer. CHS5 is required for the sustained growth at 37 degrees Celsius and is of critical importance for virulence. Especially important at infection temperatures for maintaining the cell wall integrity of developing yeast buds, elongating tips of hyphae, and random sites of expansion in sclerotic forms. This Exophiala dermatitidis (Black yeast-like fungus) protein is Chitin synthase 5.